The following is a 321-amino-acid chain: Olfactory receptor 52P1 (321 aa).

At 1–27 the chain is on the extracellular side; the sequence is MESPNHTDVDPSVFFLLGIPGLEQFHL. Residue Asn5 is glycosylated (N-linked (GlcNAc...) asparagine). The chain crosses the membrane as a helical span at residues 28 to 48; the sequence is WLSLPVCGLGTATIVGNITIL. At 49 to 56 the chain is on the cytoplasmic side; sequence VVVATEPV. Residues 57 to 77 form a helical membrane-spanning segment; that stretch reads LHKPVYLFLCMLSTIDLAASV. Over 78–101 the chain is Extracellular; the sequence is STVPKLLAIFWCGAGHISASACLA. The cysteines at positions 99 and 191 are disulfide-linked. A helical membrane pass occupies residues 102–122; sequence QMFFIHAFCMMESTVLLAMAF. At 123–141 the chain is on the cytoplasmic side; the sequence is DRYVAICHPLRYATILTDT. The chain crosses the membrane as a helical span at residues 142 to 162; it reads IIAHIGVAAVVRGSLLMLPCP. Over 163-198 the chain is Extracellular; sequence FLIGRLNFCQSHVILHTYCEHMAVVKLACGDTRPNR. Residues 199 to 219 traverse the membrane as a helical segment; that stretch reads VYGLTAALLVIGVDLFCIGLS. The Cytoplasmic segment spans residues 220–239; that stretch reads YALSAQAVLRLSSHEARSKA. The helical transmembrane segment at 240 to 260 threads the bilayer; sequence LGTCGSHVCVILISYTPALFS. Topologically, residues 261 to 275 are extracellular; that stretch reads FFTHRFGHHVPVHIH. Residues 276–296 traverse the membrane as a helical segment; the sequence is ILLANVYLLLPPALNPVVYGV. Residues 297–315 are Cytoplasmic-facing; that stretch reads KTKQIRKRVVRVFQSGQGM.

The protein belongs to the G-protein coupled receptor 1 family.

It localises to the cell membrane. Odorant receptor. This is Olfactory receptor 52P1 from Homo sapiens (Human).